The following is a 606-amino-acid chain: Double-stranded RNA-binding protein Staufen homolog 2 (606 aa).

DRBM domains are found at residues T8–L75 and T95–N181. 2 disordered regions span residues S57–T97 and Q177–S205. The segment covering A85–T97 has biased composition (polar residues). Over residues S192–S205 the composition is skewed to basic and acidic residues. DRBM domains are found at residues S207–K274, N307–Y375, and Q493–E557. The tract at residues R580 to V606 is disordered. Over residues K588–Q597 the composition is skewed to polar residues.

In terms of biological role, RNA-binding protein required for the microtubule-dependent transport of RNAs within polarized cell types. The chain is Double-stranded RNA-binding protein Staufen homolog 2 (stau2) from Danio rerio (Zebrafish).